Reading from the N-terminus, the 363-residue chain is Chorismate synthase (363 aa).

NADP(+) is bound by residues Arg47 and Arg53. FMN is bound by residues 124-126 (RSS), Gly286, 301-305 (KPTAT), and Arg327.

Belongs to the chorismate synthase family. As to quaternary structure, homotetramer. FMNH2 is required as a cofactor.

The enzyme catalyses 5-O-(1-carboxyvinyl)-3-phosphoshikimate = chorismate + phosphate. It participates in metabolic intermediate biosynthesis; chorismate biosynthesis; chorismate from D-erythrose 4-phosphate and phosphoenolpyruvate: step 7/7. Catalyzes the anti-1,4-elimination of the C-3 phosphate and the C-6 proR hydrogen from 5-enolpyruvylshikimate-3-phosphate (EPSP) to yield chorismate, which is the branch point compound that serves as the starting substrate for the three terminal pathways of aromatic amino acid biosynthesis. This reaction introduces a second double bond into the aromatic ring system. The chain is Chorismate synthase from Thermosynechococcus vestitus (strain NIES-2133 / IAM M-273 / BP-1).